A 163-amino-acid polypeptide reads, in one-letter code: Cytochrome c-type biogenesis protein CcmE (163 aa).

Residues 1 to 8 (MNPRRKKR) are Cytoplasmic-facing. Residues 9 to 29 (LTLAVALIVGVAGAASLLLYA) traverse the membrane as a helical; Signal-anchor for type II membrane protein segment. Residues 30-163 (LNSNLNLFYT…QEGVEKTAQY (134 aa)) are Periplasmic-facing. Residues His-131 and Tyr-135 each coordinate heme.

It belongs to the CcmE/CycJ family.

It localises to the cell inner membrane. Its function is as follows. Heme chaperone required for the biogenesis of c-type cytochromes. Transiently binds heme delivered by CcmC and transfers the heme to apo-cytochromes in a process facilitated by CcmF and CcmH. The sequence is that of Cytochrome c-type biogenesis protein CcmE from Shewanella denitrificans (strain OS217 / ATCC BAA-1090 / DSM 15013).